We begin with the raw amino-acid sequence, 195 residues long: Keratin-associated protein 4-3 (195 aa).

Repeat copies occupy residues 34 to 38 (CCRTT), 39 to 43 (CCRPS), 44 to 48 (CCISS), 49 to 53 (CCRPS), 54 to 58 (CCISS), 59 to 63 (CCKPS), 64 to 68 (CCRTT), 69 to 73 (CCRPS), 74 to 78 (CCISS), 79 to 83 (CCRPS), 84 to 88 (CCISS), 89 to 93 (CCKPS), 94 to 98 (CCRTT), 99 to 103 (CCRPS), 104 to 108 (CCISS), 109 to 113 (CCRPS), 114 to 118 (CCISS), 119 to 123 (CCKPS), 124 to 128 (CCQTT), 129 to 133 (CCRPS), 134 to 138 (CCISS), 144 to 148 (CCQPS), 149 to 153 (CCRPA), 154 to 158 (CCISS), 159 to 163 (CCHPS), 164 to 168 (CCVSS), 179 to 183 (CCRTT), and 189 to 193 (CCGSS). A 29 X 5 AA repeats of C-C-[GIKRQVH]-[SPT]-[STA] region spans residues 34 to 193 (CCRTTCCRPS…CFHPICCGSS (160 aa)).

It belongs to the KRTAP type 4 family. As to quaternary structure, interacts with hair keratins. As to expression, expressed specifically in the middle/uper portions of the hair cortex. Not detected in the hair matrix or cuticle.

In the hair cortex, hair keratin intermediate filaments are embedded in an interfilamentous matrix, consisting of hair keratin-associated proteins (KRTAP), which are essential for the formation of a rigid and resistant hair shaft through their extensive disulfide bond cross-linking with abundant cysteine residues of hair keratins. The matrix proteins include the high-sulfur and high-glycine-tyrosine keratins. In Homo sapiens (Human), this protein is Keratin-associated protein 4-3 (KRTAP4-3).